The sequence spans 494 residues: MPGLCIGILLLIGFGCTTAYKIPTPTVELLETGFSVSIPDEEGVKVVAFNVNRNRNFTSFINEGQYNVRLTEPQNGRWTTNFSSVPLRSQDVLYLWTSVQHQKAVYQDLAQPLPVCNLGGEYRPRGCSPGDDDFTDDNQLSTEDSALEPTAPSVCEPSESQVSPQIGVSICKGQLLFEETFDQLNESLWIHDVRLPLDSKDAEFVLYDGKAKVHDGNLVIEPLLWSSYRPDLSIANSRLDLSERCTGTHNRIKECILHSTGSGPSGIMPPIVTPRISTKETFAFQYGRIEIRAKLPKGDWIVPLLLLEPLTEWYGQSGYESGQLRVALARGNSVLRMPRGKLVDGRSLYGGPVLSTDAHQREDLWLSKRKISHFGDDFHTYSLDWSSNRLLFSVDGQVYGEMLNGFTELDENPRWKQGGPMAPFDKMFYISLGVSVGGFGDFVDHLRTATYEKPWANYHPQAKLQFHQAQDQWLPTWKQPALKIDYVRVFATDN.

The N-terminal stretch at 1 to 19 is a signal peptide; it reads MPGLCIGILLLIGFGCTTA. The CBM39 domain maps to 20-120; it reads YKIPTPTVEL…QPLPVCNLGG (101 aa). N-linked (GlcNAc...) asparagine glycans are attached at residues N56 and N81. Positions 126 to 160 are disordered; sequence GCSPGDDDFTDDNQLSTEDSALEPTAPSVCEPSES. The GH16 domain occupies 135–494; that stretch reads TDDNQLSTED…DYVRVFATDN (360 aa). N-linked (GlcNAc...) asparagine glycosylation occurs at N185.

It belongs to the insect beta-1,3-glucan binding protein family.

The protein resides in the cell membrane. Plays a key role in innate immunity by acting as a pattern recognition receptor for beta-1,3-glucan from fungi and lipopolysaccharide from Gram-negative bacteria. Upon recognition of invading microorganism-derived products, acts upstream of protease spz processing enzyme SPE to activate the Toll pathway and to induce the expression of antimicrobial peptides drosomycin, cecropin and attacin. This is Gram-negative bacteria-binding protein 1 from Drosophila melanogaster (Fruit fly).